Reading from the N-terminus, the 127-residue chain is Modulator protein MzrA (127 aa).

Topologically, residues 1 to 10 (MVISPLALRR) are cytoplasmic. The helical transmembrane segment at 11–31 (LSYGLIALVLLSALILVWTAL) threads the bilayer. The Periplasmic portion of the chain corresponds to 32–127 (QRQESTLAIR…RLRDTSHRFG (96 aa)).

The protein belongs to the MzrA family. As to quaternary structure, interacts with EnvZ.

The protein localises to the cell inner membrane. Its function is as follows. Modulates the activity of the EnvZ/OmpR two-component regulatory system, probably by directly modulating EnvZ enzymatic activity and increasing stability of phosphorylated OmpR. The protein is Modulator protein MzrA of Enterobacter sp. (strain 638).